The chain runs to 63 residues: Bowman-birk type proteinase inhibitor (63 aa).

Disulfide bonds link Cys-7-Cys-61, Cys-8-Cys-23, Cys-11-Cys-57, Cys-13-Cys-21, Cys-31-Cys-38, Cys-35-Cys-50, and Cys-40-Cys-48.

In terms of biological role, inhibits trypsin, chymotrypsin, plasmin and factor XIIa. Does not inhibit factor Xa, thrombin and plasma kallikrein. This chain is Bowman-birk type proteinase inhibitor, found in Amburana acreana (Cerejeira).